The sequence spans 210 residues: Thymidylate kinase (210 aa).

10–17 is an ATP binding site; that stretch reads GPEGAGKS.

It belongs to the thymidylate kinase family.

It catalyses the reaction dTMP + ATP = dTDP + ADP. Functionally, phosphorylation of dTMP to form dTDP in both de novo and salvage pathways of dTTP synthesis. The chain is Thymidylate kinase from Pseudomonas putida (strain GB-1).